The following is a 199-amino-acid chain: NAD(P)H dehydrogenase (quinone) (199 aa).

The Flavodoxin-like domain occupies 4–190 (VLVLYYSAYG…AGARYQGRVI (187 aa)). Residues 10–15 (SAYGHI) and 78–80 (TRF) contribute to the FMN site. Y12 is an NAD(+) binding site. W98 lines the substrate pocket. Residues 113 to 119 (STATQHG) and H134 each bind FMN.

Belongs to the WrbA family. FMN serves as cofactor.

It carries out the reaction a quinone + NADH + H(+) = a quinol + NAD(+). The catalysed reaction is a quinone + NADPH + H(+) = a quinol + NADP(+). The sequence is that of NAD(P)H dehydrogenase (quinone) from Bradyrhizobium sp. (strain BTAi1 / ATCC BAA-1182).